Reading from the N-terminus, the 1685-residue chain is Phosphatidylinositol 4-phosphate 3-kinase C2 domain-containing subunit alpha (1685 aa).

Disordered regions lie at residues 1–33 (MAQI…EALQ) and 41–60 (KLQK…LSSS). The residue at position 2 (A2) is an N-acetylalanine. Residues 2–142 (AQISSNSGFK…FRPTIQRGQW (141 aa)) are interaction with clathrin; sufficient to induce clathrin assembly. Residues 19–31 (EPTRAKDVDKEEA) show a composition bias toward basic and acidic residues. A compositionally biased stretch (polar residues) spans 49–60 (TDNQRGFELSSS). S60, S108, S259, S327, and S338 each carry phosphoserine. The 89-residue stretch at 419–507 (NASVKVSIDI…DTEIRLQLLT (89 aa)) folds into the PI3K-RBD domain. Position 628 is a phosphoserine (S628). The C2 PI3K-type domain occupies 680-839 (TTEQLQFTIF…ERIVLQVDFP (160 aa)). Positions 859-1035 (QHNLETLEND…EHVLGALLSV (177 aa)) constitute a PIK helical domain. The PI3K/PI4K catalytic domain occupies 1103–1381 (SIKSCSFFSS…LIESSLGSIA (279 aa)). The segment at 1109–1115 (FFSSNAV) is G-loop. Positions 1245-1253 (GICDRHNDN) are catalytic loop. Residues 1264 to 1290 (HIDFGKFLGHAQMFGTFKRDRAPFVLT) form an activation loop region. Residues 1420–1536 (GRIKEVSVFT…TFFHPLLRDE (117 aa)) form the PX domain. The tract at residues 1486–1491 (RMVLGR) is interaction with PtdIns(4,5)P2-containing membranes. S1551 is modified (phosphoserine). The C2 domain maps to 1554-1677 (TPGQIGGAVK…NLSKETVKWY (124 aa)). The Nuclear localization signal motif lies at 1607 to 1618 (SKRKTKISRKTR).

Belongs to the PI3/PI4-kinase family. As to quaternary structure, part of a complex with ERBB2 and EGFR. Interacts with clathrin trimers. Interacts with SBF2/MTMR13. Requires Ca(2+) as cofactor. The cofactor is Mg(2+). Phosphorylated on Ser-259 during mitosis and upon UV irradiation; which does not change enzymatic activity but leads to proteasomal degradation. Phosphorylated upon insulin stimulation; which may lead to enzyme activation.

Its subcellular location is the cell membrane. It localises to the cytoplasmic vesicle. The protein resides in the clathrin-coated vesicle. It is found in the nucleus. The protein localises to the cytoplasm. Its subcellular location is the golgi apparatus. It localises to the trans-Golgi network. The catalysed reaction is a 1,2-diacyl-sn-glycero-3-phospho-(1D-myo-inositol 4-phosphate) + ATP = a 1,2-diacyl-sn-glycero-3-phospho-(1D-myo-inositol-3,4-bisphosphate) + ADP + H(+). It carries out the reaction a 1,2-diacyl-sn-glycero-3-phospho-(1D-myo-inositol) + ATP = a 1,2-diacyl-sn-glycero-3-phospho-(1D-myo-inositol-3-phosphate) + ADP + H(+). The enzyme catalyses a 1,2-diacyl-sn-glycero-3-phospho-(1D-myo-inositol-4,5-bisphosphate) + ATP = a 1,2-diacyl-sn-glycero-3-phospho-(1D-myo-inositol-3,4,5-trisphosphate) + ADP + H(+). Only slightly inhibited by wortmannin and LY294002. Activated by clathrin and insulin. Functionally, generates phosphatidylinositol 3-phosphate (PtdIns3P) and phosphatidylinositol 3,4-bisphosphate (PtdIns(3,4)P2) that act as second messengers. Has a role in several intracellular trafficking events. Functions in insulin signaling and secretion. Required for translocation of the glucose transporter SLC2A4/GLUT4 to the plasma membrane and glucose uptake in response to insulin-mediated RHOQ activation. Regulates insulin secretion through two different mechanisms: involved in glucose-induced insulin secretion downstream of insulin receptor in a pathway that involves AKT1 activation and TBC1D4/AS160 phosphorylation, and participates in the late step of insulin granule exocytosis probably in insulin granule fusion. Synthesizes PtdIns3P in response to insulin signaling. Functions in clathrin-coated endocytic vesicle formation and distribution. Regulates dynamin-independent endocytosis, probably by recruiting EEA1 to internalizing vesicles. In neurosecretory cells synthesizes PtdIns3P on large dense core vesicles. Participates in calcium induced contraction of vascular smooth muscle by regulating myosin light chain (MLC) phosphorylation through a mechanism involving Rho kinase-dependent phosphorylation of the MLCP-regulatory subunit MYPT1. May play a role in the EGF signaling cascade. May be involved in mitosis and UV-induced damage response. Required for maintenance of normal renal structure and function by supporting normal podocyte function. Involved in the regulation of ciliogenesis and trafficking of ciliary components. The sequence is that of Phosphatidylinositol 4-phosphate 3-kinase C2 domain-containing subunit alpha (PIK3C2A) from Pongo abelii (Sumatran orangutan).